The sequence spans 409 residues: NADH-quinone oxidoreductase subunit D (409 aa).

This sequence belongs to the complex I 49 kDa subunit family. In terms of assembly, NDH-1 is composed of 14 different subunits. Subunits NuoB, C, D, E, F, and G constitute the peripheral sector of the complex.

It is found in the cell inner membrane. The catalysed reaction is a quinone + NADH + 5 H(+)(in) = a quinol + NAD(+) + 4 H(+)(out). In terms of biological role, NDH-1 shuttles electrons from NADH, via FMN and iron-sulfur (Fe-S) centers, to quinones in the respiratory chain. The immediate electron acceptor for the enzyme in this species is believed to be ubiquinone. Couples the redox reaction to proton translocation (for every two electrons transferred, four hydrogen ions are translocated across the cytoplasmic membrane), and thus conserves the redox energy in a proton gradient. The polypeptide is NADH-quinone oxidoreductase subunit D (Sulfurovum sp. (strain NBC37-1)).